The primary structure comprises 348 residues: MTTALEPEDQKGLLIIKAEDHYWGQDSSSQKCSPHRRELYRQHFRKLCYQDAPGPREALTQLWELCRQWLRPECHTKEQILDLLVLEQFLSILPKDLQAWVRAHHPETGEEAVTVLEDLERELDEPGKQVPGNSERRDILMDKLAPLGRPYESLTVQLHPKKTQLEQEAGKPQRNGDKTRTKNEELFQKEDMPKDKEFLGEINDRLNKDTPQHPKSKDIIENEGRSEWQQRERRRYKCDECGKSFSHSSDLSKHRRTHTGEKPYKCDECGKAFIQRSHLIGHHRVHTGVKPYKCKECGKDFSGRTGLIQHQRIHTGEKPYECDECGRPFRVSSALIRHQRIHTANKLY.

An SCAN box domain is found at 41–123; the sequence is RQHFRKLCYQ…TVLEDLEREL (83 aa). Disordered stretches follow at residues 160–184 and 205–226; these read PKKT…TKNE and RLNK…EGRS. Over residues 163–184 the composition is skewed to basic and acidic residues; sequence TQLEQEAGKPQRNGDKTRTKNE. 4 consecutive C2H2-type zinc fingers follow at residues 236-258, 264-286, 292-314, and 320-342; these read YKCD…RRTH, YKCD…HRVH, YKCK…QRIH, and YECD…QRIH.

This sequence belongs to the krueppel C2H2-type zinc-finger protein family.

The protein resides in the nucleus. May be involved in transcriptional regulation. This chain is Zinc finger and SCAN domain-containing protein 16 (ZSCAN16), found in Homo sapiens (Human).